A 306-amino-acid chain; its full sequence is Manganese-binding lipoprotein MntA (306 aa).

Positions 1 to 18 (MRQGLMAAVLFATFALTG) are cleaved as a signal peptide. Cysteine 19 carries N-palmitoyl cysteine lipidation. A lipid anchor (S-diacylglycerol cysteine) is attached at cysteine 19. Mn(2+) contacts are provided by histidine 66, histidine 132, histidine 198, and aspartate 278.

It belongs to the bacterial solute-binding protein 9 family. As to quaternary structure, the complex is probably composed of two ATP-binding proteins (MntB), two transmembrane proteins (MntC and MntD) and a solute-binding protein (MntA). Interacts with FloT.

Its subcellular location is the cell membrane. It is found in the membrane raft. In terms of biological role, probably part of ATP-binding cassette (ABC) transport system MntABCD involved in manganese import. Binds manganese and delivers it to the membrane permease for translocation into the cytoplasm. This is Manganese-binding lipoprotein MntA from Bacillus subtilis (strain 168).